A 285-amino-acid polypeptide reads, in one-letter code: Eukaryotic translation initiation factor 3 subunit F-2 (285 aa).

In terms of domain architecture, MPN spans 11–145 (VLIKPLVLFQ…TRLYCAVEIG (135 aa)).

It belongs to the eIF-3 subunit F family. As to quaternary structure, component of the eukaryotic translation initiation factor 3 (eIF-3) complex. The eIF-3 complex interacts with pix.

It is found in the cytoplasm. Functionally, component of the eukaryotic translation initiation factor 3 (eIF-3) complex, which is involved in protein synthesis of a specialized repertoire of mRNAs and, together with other initiation factors, stimulates binding of mRNA and methionyl-tRNAi to the 40S ribosome. The eIF-3 complex specifically targets and initiates translation of a subset of mRNAs involved in cell proliferation. In Drosophila erecta (Fruit fly), this protein is Eukaryotic translation initiation factor 3 subunit F-2.